A 377-amino-acid chain; its full sequence is Nitric oxide reductase FlRd-NAD(+) reductase (377 aa).

It belongs to the FAD-dependent oxidoreductase family. The cofactor is FAD.

The protein localises to the cytoplasm. The catalysed reaction is 2 reduced [nitric oxide reductase rubredoxin domain] + NAD(+) + H(+) = 2 oxidized [nitric oxide reductase rubredoxin domain] + NADH. It functions in the pathway nitrogen metabolism; nitric oxide reduction. One of at least two accessory proteins for anaerobic nitric oxide (NO) reductase. Reduces the rubredoxin moiety of NO reductase. The polypeptide is Nitric oxide reductase FlRd-NAD(+) reductase (Salmonella paratyphi C (strain RKS4594)).